The following is a 494-amino-acid chain: Ketol-acid reductoisomerase (NADP(+)) (494 aa).

Residues 14 to 208 (LDQIGRCRFM…GGDRAGVLES (195 aa)) form the KARI N-terminal Rossmann domain. Residues 45-48 (CGAQ), R68, R76, S78, and 108-110 (DKQ) contribute to the NADP(+) site. Residue H132 is part of the active site. G158 is a binding site for NADP(+). 2 consecutive KARI C-terminal knotted domains span residues 209-344 (SFVA…NAPE) and 345-487 (YNGK…MTDM). Residues D217, E221, E389, and E393 each contribute to the Mg(2+) site. S414 contacts substrate.

The protein belongs to the ketol-acid reductoisomerase family. The cofactor is Mg(2+).

It carries out the reaction (2R)-2,3-dihydroxy-3-methylbutanoate + NADP(+) = (2S)-2-acetolactate + NADPH + H(+). The catalysed reaction is (2R,3R)-2,3-dihydroxy-3-methylpentanoate + NADP(+) = (S)-2-ethyl-2-hydroxy-3-oxobutanoate + NADPH + H(+). Its pathway is amino-acid biosynthesis; L-isoleucine biosynthesis; L-isoleucine from 2-oxobutanoate: step 2/4. It functions in the pathway amino-acid biosynthesis; L-valine biosynthesis; L-valine from pyruvate: step 2/4. Involved in the biosynthesis of branched-chain amino acids (BCAA). Catalyzes an alkyl-migration followed by a ketol-acid reduction of (S)-2-acetolactate (S2AL) to yield (R)-2,3-dihydroxy-isovalerate. In the isomerase reaction, S2AL is rearranged via a Mg-dependent methyl migration to produce 3-hydroxy-3-methyl-2-ketobutyrate (HMKB). In the reductase reaction, this 2-ketoacid undergoes a metal-dependent reduction by NADPH to yield (R)-2,3-dihydroxy-isovalerate. The chain is Ketol-acid reductoisomerase (NADP(+)) from Pseudoalteromonas atlantica (strain T6c / ATCC BAA-1087).